The sequence spans 244 residues: Probable transcriptional regulatory protein XF_1906 (244 aa).

This sequence belongs to the TACO1 family.

It localises to the cytoplasm. This chain is Probable transcriptional regulatory protein XF_1906, found in Xylella fastidiosa (strain 9a5c).